A 342-amino-acid polypeptide reads, in one-letter code: MDMAILPAGVWGTALAVPASAAGRRVRLWRRTPGWAESWDRGHPVLPGLKLPENVVACDSAQAAVSDADLVILSPAGAGLRPVCRLVRPHLRPDAVIVCATKSIEPETHLLVHQVVEEELPGHRGRIVALSGPNFAHEVAAGLPTGAVAACPDLSLADWVQQALMTDRFRVYTNPDLVGVELAGALKNVIALGAGISDGLGMGDNARAALITRGLVEMARLGRAMGANPLTFAGLAGMGDLVLSCTGDSSRNRRAGLAIGRGQSAEAFLAETGLTVEGITTARAGWQLAQRLGVRMPITEAIYQVLYEGLPPLTAMERLMARPRAHELEEVAGADLKPPFDP.

W11, R31, and K102 together coordinate NADPH. K102 and G132 together coordinate sn-glycerol 3-phosphate. A136 serves as a coordination point for NADPH. Residues K187, D240, S250, R251, and N252 each contribute to the sn-glycerol 3-phosphate site. K187 acts as the Proton acceptor in catalysis. R251 serves as a coordination point for NADPH. E277 lines the NADPH pocket.

This sequence belongs to the NAD-dependent glycerol-3-phosphate dehydrogenase family.

It is found in the cytoplasm. The enzyme catalyses sn-glycerol 3-phosphate + NAD(+) = dihydroxyacetone phosphate + NADH + H(+). It carries out the reaction sn-glycerol 3-phosphate + NADP(+) = dihydroxyacetone phosphate + NADPH + H(+). It functions in the pathway membrane lipid metabolism; glycerophospholipid metabolism. Its function is as follows. Catalyzes the reduction of the glycolytic intermediate dihydroxyacetone phosphate (DHAP) to sn-glycerol 3-phosphate (G3P), the key precursor for phospholipid synthesis. The chain is Glycerol-3-phosphate dehydrogenase [NAD(P)+] from Symbiobacterium thermophilum (strain DSM 24528 / JCM 14929 / IAM 14863 / T).